A 334-amino-acid polypeptide reads, in one-letter code: Biotin synthase (334 aa).

The 220-residue stretch at 41 to 260 (TRLETASLLS…IAVARIMMPR (220 aa)) folds into the Radical SAM core domain. [4Fe-4S] cluster contacts are provided by Cys-56, Cys-60, and Cys-63. Cys-100, Cys-131, Cys-191, and Arg-264 together coordinate [2Fe-2S] cluster.

Belongs to the radical SAM superfamily. Biotin synthase family. As to quaternary structure, homodimer. It depends on [4Fe-4S] cluster as a cofactor. [2Fe-2S] cluster is required as a cofactor.

The catalysed reaction is (4R,5S)-dethiobiotin + (sulfur carrier)-SH + 2 reduced [2Fe-2S]-[ferredoxin] + 2 S-adenosyl-L-methionine = (sulfur carrier)-H + biotin + 2 5'-deoxyadenosine + 2 L-methionine + 2 oxidized [2Fe-2S]-[ferredoxin]. Its pathway is cofactor biosynthesis; biotin biosynthesis; biotin from 7,8-diaminononanoate: step 2/2. Its function is as follows. Catalyzes the conversion of dethiobiotin (DTB) to biotin by the insertion of a sulfur atom into dethiobiotin via a radical-based mechanism. In Bradyrhizobium sp. (strain ORS 278), this protein is Biotin synthase.